Reading from the N-terminus, the 301-residue chain is MAPSEAPQPLPLCALEHQSLAIDLLLSMFPDEIEQTSSTATSIEHLRQYLDDPSQASPRLPHSVEFTLNLSIDPEHELQLHIRILLEQVNVDIGKDADADEPPLPVITFRCPTWMNRKTHTDLVQRMPLDSPDSILMTVEYLKEESTEYLATCAASSATNEPEAQATSGKLVRVWFYLQSLSTRSKRNDIVNWAPNYDLTGFVLAGKPGILCLEGTSDNISAYMSDIKTRSWSDIPSHQKKISERYREEGQHIERVFQNMREVTGEISKGGHRGNRGEMGEVRRMFEGVGLGEVFAEVLGL.

Part of the gene cluster that mediates the biosynthesis of the antihypercholesterolemic agents phomoidrides which are dimeric anhydrides. The function of phiF within the pathway has still to be determined. The pathway begins with the highly reducing polyketide synthase phiA that catalyzes the formation of a C12-fatty acyl-ACP, starting from one acetate and 5 malonate units. The hydrolase phiM is involved in the release of the C12-fatty acyl chain from phiA. The alkylcitrate synthase (ACS) phiJ and the alkylcitrate dehydratase (ACDH) phiI then give rise to decarboxylated monomeric anhydrides by coupling the C12-fatty acyl chain with oxalacetic acid. The cyclase phiC is responsible for the dimerization of the monomeric anhydrides which leads to the production of prephomoidride that contains the characteristic bicyclo[4.3.1]deca-1,6-diene system of phomoidrides. Iterative oxidation catalyzed by the alpha-ketoglutarate-dependent dioxygenase phiK produced then phomoidride A. Finally, the methyltransferase phiE converts phomoidride A to phomoidride B via an acetalization reaction. The phosphatidylethanolamine-binding protein phiB and phiN are not essential for dimerization and their functions have still to be determined. The sequence is that of Phomoidride biosynthesis cluster protein F from Fungal sp. (strain ATCC 74256).